Reading from the N-terminus, the 270-residue chain is Energy-coupling factor transporter transmembrane protein EcfT (270 aa).

4 helical membrane passes run 36–56, 72–92, 108–128, and 248–268; these read LFIV…LISI, PIFI…GGAN, LIMA…TSLL, and FIAS…RIWW.

This sequence belongs to the energy-coupling factor EcfT family. In terms of assembly, forms a stable energy-coupling factor (ECF) transporter complex composed of 2 membrane-embedded substrate-binding proteins (S component), 2 ATP-binding proteins (A component) and 2 transmembrane proteins (T component). May be able to interact with more than 1 S component at a time.

The protein resides in the cell membrane. In terms of biological role, transmembrane (T) component of an energy-coupling factor (ECF) ABC-transporter complex. Unlike classic ABC transporters this ECF transporter provides the energy necessary to transport a number of different substrates. The protein is Energy-coupling factor transporter transmembrane protein EcfT of Clostridium kluyveri (strain ATCC 8527 / DSM 555 / NBRC 12016 / NCIMB 10680 / K1).